Consider the following 151-residue polypeptide: 3-hydroxyacyl-[acyl-carrier-protein] dehydratase FabZ (151 aa).

His-54 is a catalytic residue.

Belongs to the thioester dehydratase family. FabZ subfamily.

Its subcellular location is the cytoplasm. The catalysed reaction is a (3R)-hydroxyacyl-[ACP] = a (2E)-enoyl-[ACP] + H2O. Functionally, involved in unsaturated fatty acids biosynthesis. Catalyzes the dehydration of short chain beta-hydroxyacyl-ACPs and long chain saturated and unsaturated beta-hydroxyacyl-ACPs. This chain is 3-hydroxyacyl-[acyl-carrier-protein] dehydratase FabZ, found in Salmonella agona (strain SL483).